Reading from the N-terminus, the 223-residue chain is Urease accessory protein UreF (223 aa).

This sequence belongs to the UreF family. UreD, UreF and UreG form a complex that acts as a GTP-hydrolysis-dependent molecular chaperone, activating the urease apoprotein by helping to assemble the nickel containing metallocenter of UreC. The UreE protein probably delivers the nickel.

The protein resides in the cytoplasm. Functionally, required for maturation of urease via the functional incorporation of the urease nickel metallocenter. The polypeptide is Urease accessory protein UreF (Rhizobium johnstonii (strain DSM 114642 / LMG 32736 / 3841) (Rhizobium leguminosarum bv. viciae)).